We begin with the raw amino-acid sequence, 98 residues long: NADH-ubiquinone oxidoreductase chain 4L (98 aa).

The next 3 helical transmembrane spans lie at Met1–Val21, Ser29–Leu49, and Ile61–Val81.

The protein belongs to the complex I subunit 4L family. Core subunit of respiratory chain NADH dehydrogenase (Complex I) which is composed of 45 different subunits.

The protein resides in the mitochondrion inner membrane. The catalysed reaction is a ubiquinone + NADH + 5 H(+)(in) = a ubiquinol + NAD(+) + 4 H(+)(out). Functionally, core subunit of the mitochondrial membrane respiratory chain NADH dehydrogenase (Complex I) which catalyzes electron transfer from NADH through the respiratory chain, using ubiquinone as an electron acceptor. Part of the enzyme membrane arm which is embedded in the lipid bilayer and involved in proton translocation. The protein is NADH-ubiquinone oxidoreductase chain 4L (MT-ND4L) of Oryctolagus cuniculus (Rabbit).